The chain runs to 251 residues: uncharacterized protein (251 aa).

The next 5 membrane-spanning stretches (helical) occupy residues 22-42 (FLGV…DIVI), 86-106 (FFLS…VILA), 120-140 (LASS…AGIV), 157-177 (LGYF…IPYV), and 205-225 (IVAW…SFLA).

It localises to the cell membrane. This is an uncharacterized protein from Mycoplasma pneumoniae (strain ATCC 29342 / M129 / Subtype 1) (Mycoplasmoides pneumoniae).